A 451-amino-acid polypeptide reads, in one-letter code: POU domain, class 3, transcription factor 1 (451 aa).

Disordered stretches follow at residues 1-21, 69-114, 134-154, 186-253, and 395-451; these read MATTAQYLPRGPGGGAGGTGP, AHPQ…GFHA, AHHLGPAMSPSPGAGGGHQPQ, GLHH…PSSD, and KRMT…GSVQ. 3 stretches are compositionally biased toward gly residues: residues 11–20, 76–85, and 95–112; these read GPGGGAGGTG, TGGGGGGDWA, and AGGGSTGRADDGGGGGGF. Over residues 134–145 the composition is skewed to low complexity; the sequence is AHHLGPAMSPSP. The segment covering 190–199 has biased composition (basic and acidic residues); that stretch reads ALHEDGHEAQ. Positions 220-232 are enriched in low complexity; that stretch reads AGGLHAAAAHLHP. The POU-specific domain occupies 247–321; it reads EDAPSSDDLE…LLNKWLEETD (75 aa). The segment at residues 339 to 398 is a DNA-binding region (homeobox); that stretch reads KRKKRTSIEVGVKGALESHFLKCPKPSAHEITGLADSLQLEKEVVRVWFCNRRQKEKRMT. Positions 427–436 are enriched in pro residues; it reads PSAPPPPPPA.

The protein belongs to the POU transcription factor family. Class-3 subfamily. In terms of tissue distribution, neural tissues and testis.

It is found in the nucleus. In terms of biological role, transcription factor that binds to the octamer motif (5'-ATTTGCAT-3'). Acts as a transcriptional activator when binding cooperatively with SOX4, SOX11, or SOX12 to gene promoters. Acts as a transcriptional repressor of myelin-specific genes. This Rattus norvegicus (Rat) protein is POU domain, class 3, transcription factor 1 (Pou3f1).